We begin with the raw amino-acid sequence, 492 residues long: Cell death protein 6 (492 aa).

Positions glycine 19–serine 29 are enriched in low complexity. The disordered stretch occupies residues glycine 19–lysine 38. Positions isoleucine 55 to leucine 215 constitute a PID domain. 2 disordered regions span residues threonine 241 to alanine 385 and threonine 464 to glutamine 492. Positions proline 244–proline 268 are enriched in pro residues. Positions alanine 300–serine 312 are enriched in low complexity. Positions glycine 313 to alanine 333 are enriched in pro residues. Residues phenylalanine 373 to threonine 383 show a composition bias toward basic and acidic residues.

The protein belongs to the ced-6 family. Homodimer. Interacts with ced-1. Interacts with E3 ubiquitin-protein ligase trim-21. Detected in gonadal sheath cells.

Its subcellular location is the cytoplasm. In terms of biological role, may function as an adapter protein in a pathway that mediates recognition and phagocytosis of apoptotic cells during normal development. Promotes engulfment of cells at both early and late stages of apoptosis. Required for actin reorganization around apoptotic cells. Plays a role in protecting dopaminergic neurons from oxidative stress-induced degeneration. Mediates recruitment of E3 ubiquitin-protein ligase trim-21 to the apoptotic cell surface which promotes ubiquitination and degradation of ced-1. This Caenorhabditis elegans protein is Cell death protein 6.